The following is a 558-amino-acid chain: Factor VII-activating protease (558 aa).

A signal peptide spans 1-23; the sequence is MSVVMLVFRVLLLIALVGNSAIG. EGF-like domains follow at residues 71–107, 109–146, and 148–186; these read DDDP…SRCQ, VQNK…PDCS, and VLPV…RFCE. Cystine bridges form between Cys75–Cys86, Cys80–Cys95, Cys97–Cys106, Cys113–Cys123, Cys118–Cys134, Cys136–Cys145, Cys152–Cys163, Cys157–Cys174, Cys176–Cys185, Cys192–Cys274, Cys213–Cys255, Cys244–Cys269, Cys299–Cys433, Cys345–Cys361, Cys353–Cys422, Cys445–Cys513, Cys475–Cys491, and Cys503–Cys531. The region spanning 191 to 274 is the Kringle domain; sequence DCYVGDGYSY…KWEYCNVEVC (84 aa). One can recognise a Peptidase S1 domain in the interval 312–553; the sequence is IYGGFKSTAG…FLNWIKTTMH (242 aa). Catalysis depends on charge relay system residues His360 and Asp409. Ser507 (charge relay system) is an active-site residue.

The protein belongs to the peptidase S1 family. As to quaternary structure, heterodimer; disulfide-linked. Heterodimer of a 50 kDa heavy and a 27 kDa light chain linked by a disulfide bond. Post-translationally, proteolytic cleavage at Gly-23 or Met-27 can give rise to the 50 kDa heavy chain (HC) and cleavage at Arg-311 or Lys-317 can give rise to the 27 kDa light chain (LC). The HC can undergo further proteolytic cleavage giving rise to a 26 kDa fragment. The LC can undergo further proteolytic cleavage at Arg-311 leading to a 17-kDa fragment and at Arg-478 leading to a 8-kDa fragment.

Its subcellular location is the secreted. In terms of biological role, cleaves the alpha-chain at multiple sites and the beta-chain between 'Lys-53' and 'Lys-54' but not the gamma-chain of fibrinogen and therefore does not initiate the formation of the fibrin clot and does not cause the fibrinolysis directly. It does not cleave (activate) prothrombin and plasminogen but converts the inactive single chain urinary plasminogen activator (pro-urokinase) to the active two chain form. Activates coagulation factor VII. May function as a tumor suppressor negatively regulating cell proliferation and cell migration. The sequence is that of Factor VII-activating protease from Rattus norvegicus (Rat).